We begin with the raw amino-acid sequence, 601 residues long: RNA polymerase II C-terminal domain phosphatase-like 5 (601 aa).

Positions 1–20 (MFVAKNLSPERESKRQKKEP) are disordered. The segment covering 8–20 (SPERESKRQKKEP) has biased composition (basic and acidic residues). 2 FCP1 homology domains span residues 84 to 259 (LNMK…TDES) and 381 to 553 (LNEK…DESE).

Expressed in roots, seedlings, hypocotyls, cotyledons, leaves, siliques and flowers.

The protein localises to the nucleus. It carries out the reaction O-phospho-L-seryl-[protein] + H2O = L-seryl-[protein] + phosphate. The catalysed reaction is O-phospho-L-threonyl-[protein] + H2O = L-threonyl-[protein] + phosphate. Functionally, mediates the dephosphorylation of 'Ser-2' of the heptad repeats YSPTSPS in the C-terminal domain of the largest RNA polymerase II subunit (RPB1). This promotes the activity of RNA polymerase II. Positively regulates abscisic acid (ABA) and drought responses, including the regulation of specific genes expression. This is RNA polymerase II C-terminal domain phosphatase-like 5 from Arabidopsis thaliana (Mouse-ear cress).